Here is a 555-residue protein sequence, read N- to C-terminus: Hydroxylamine reductase (555 aa).

[4Fe-4S] cluster-binding residues include Cys5, Cys8, Cys17, and Cys23. Residues His248, Glu272, Cys316, Cys408, Cys436, Cys461, Glu496, and Lys498 each coordinate hybrid [4Fe-2O-2S] cluster. Cys408 carries the post-translational modification Cysteine persulfide.

Belongs to the HCP family. The cofactor is [4Fe-4S] cluster. It depends on hybrid [4Fe-2O-2S] cluster as a cofactor.

It localises to the cytoplasm. It catalyses the reaction A + NH4(+) + H2O = hydroxylamine + AH2 + H(+). Functionally, catalyzes the reduction of hydroxylamine to form NH(3) and H(2)O. This Halothermothrix orenii (strain H 168 / OCM 544 / DSM 9562) protein is Hydroxylamine reductase.